A 195-amino-acid chain; its full sequence is MARCKS-related protein (195 aa).

The tract at residues 1–195 is disordered; sequence MGSQSSKAPR…PTPASAEQNE (195 aa). Gly-2 is lipidated: N-myristoyl glycine. A Phosphothreonine modification is found at Thr-14. Low complexity predominate over residues 16–26; sequence EEAAGASPAKA. Ser-22, Ser-36, Ser-41, and Ser-48 each carry phosphoserine. Positions 53–64 are enriched in low complexity; the sequence is GTDEAAGATGDA. Phosphoserine is present on Ser-71. The segment covering 76-85 has biased composition (basic and acidic residues); sequence AKGEVPPKET. Thr-85 carries the phosphothreonine modification. Residues 86–98 show a composition bias toward basic residues; that stretch reads PKKKKKFSFKKPF. The tract at residues 87–110 is effector domain involved in lipid-binding and calmodulin-binding; sequence KKKKKFSFKKPFKLSGLSFKRNRK. Ser-93, Ser-101, Ser-104, Ser-119, Ser-120, and Ser-135 each carry phosphoserine. Thr-148 is subject to Phosphothreonine. Ser-151, Ser-162, and Ser-165 each carry phosphoserine. Low complexity predominate over residues 153–195; the sequence is EPQAKGAEASAASEEEAGPQATEPSTPSGPESGPTPASAEQNE. A phosphothreonine mark is found at Thr-178 and Thr-187.

This sequence belongs to the MARCKS family. As to quaternary structure, binds to filamentous actin (F-actin), but not to monomeric G-actin, independently of its phosphorylation status. In terms of processing, phosphorylated. Phosphorylation at Ser-120 and Thr-178 is non-redundantly catalyzed by MAPK8 in vivo. Phosphorylation at Thr-148 is preferentially catalyzed by MAPK8 in vivo, but this modification can also be catalyzed by other kinases in the absence of MAPK8. May be phosphorylated by protein kinase C, which disrupts the interaction with calmodulin.

It is found in the cytoplasm. The protein resides in the cytoskeleton. The protein localises to the cell membrane. Functionally, controls cell movement by regulating actin cytoskeleton homeostasis and filopodium and lamellipodium formation. When unphosphorylated, induces cell migration. When phosphorylated by MAPK8, induces actin bundles formation and stabilization, thereby reducing actin plasticity, hence restricting cell movement, including neuronal migration. May be involved in coupling the protein kinase C and calmodulin signal transduction systems. This chain is MARCKS-related protein (MARCKSL1), found in Homo sapiens (Human).